Reading from the N-terminus, the 132-residue chain is Small ribosomal subunit protein uS8 (132 aa).

The protein belongs to the universal ribosomal protein uS8 family. In terms of assembly, part of the 30S ribosomal subunit. Contacts proteins S5 and S12.

Functionally, one of the primary rRNA binding proteins, it binds directly to 16S rRNA central domain where it helps coordinate assembly of the platform of the 30S subunit. This Rhodospirillum centenum (strain ATCC 51521 / SW) protein is Small ribosomal subunit protein uS8.